The following is a 292-amino-acid chain: Siderophore triacetylfusarinine C esterase (292 aa).

The triacetylfusarinine C site is built by Arg97, Ser148, Tyr149, Ser174, Trp176, and His267.

Belongs to the esterase D family.

It localises to the cytoplasm. It catalyses the reaction triacetylfusarinine C + 3 H2O = 3 N-acetylfusarinine + Fe(3+). Its function is as follows. Displays specific triacetylfusarinine C (TAFC) esterase activity but does not hydrolyze fusarinine C, which has the same core structure as TAFC. Hydrolysis optimizes but is not essential for TAFC-mediated iron uptake. Both extra- and intracellular siderophores have been shown to be crucial for the virulence. Subsequent to chelation of iron and uptake, FsC and TAFC are hydrolyzed and the iron is transferred to the metabolism or to the intracellular siderophore ferricrocin (FC) for transport and storage of iron. Hydrolyzes both TAFC and DF-TAFC with equal efficiencies, suggesting that its function might not be restricted to the release of iron from the siderophore but might also include the degradation of the iron-free chelator to protect cells. The polypeptide is Siderophore triacetylfusarinine C esterase (Aspergillus fumigatus (strain ATCC MYA-4609 / CBS 101355 / FGSC A1100 / Af293) (Neosartorya fumigata)).